The chain runs to 477 residues: Bifunctional protein HldE (477 aa).

The tract at residues 1-319 (MTPPLPGFRD…AALGGGPAPA (319 aa)) is ribokinase. An ATP-binding site is contributed by 195–198 (NLAE). Residue D264 is part of the active site. Residues 346 to 477 (MTNGCFDLLH…DLIARIRSRG (132 aa)) are cytidylyltransferase.

The protein in the N-terminal section; belongs to the carbohydrate kinase PfkB family. This sequence in the C-terminal section; belongs to the cytidylyltransferase family. Homodimer.

The catalysed reaction is D-glycero-beta-D-manno-heptose 7-phosphate + ATP = D-glycero-beta-D-manno-heptose 1,7-bisphosphate + ADP + H(+). It catalyses the reaction D-glycero-beta-D-manno-heptose 1-phosphate + ATP + H(+) = ADP-D-glycero-beta-D-manno-heptose + diphosphate. Its pathway is nucleotide-sugar biosynthesis; ADP-L-glycero-beta-D-manno-heptose biosynthesis; ADP-L-glycero-beta-D-manno-heptose from D-glycero-beta-D-manno-heptose 7-phosphate: step 1/4. It participates in nucleotide-sugar biosynthesis; ADP-L-glycero-beta-D-manno-heptose biosynthesis; ADP-L-glycero-beta-D-manno-heptose from D-glycero-beta-D-manno-heptose 7-phosphate: step 3/4. Functionally, catalyzes the phosphorylation of D-glycero-D-manno-heptose 7-phosphate at the C-1 position to selectively form D-glycero-beta-D-manno-heptose-1,7-bisphosphate. Catalyzes the ADP transfer from ATP to D-glycero-beta-D-manno-heptose 1-phosphate, yielding ADP-D-glycero-beta-D-manno-heptose. The protein is Bifunctional protein HldE of Halorhodospira halophila (strain DSM 244 / SL1) (Ectothiorhodospira halophila (strain DSM 244 / SL1)).